Here is a 235-residue protein sequence, read N- to C-terminus: Transmembrane protein 176A (235 aa).

Serine 38 carries the phosphoserine modification. The next 4 membrane-spanning stretches (helical) occupy residues 55–75 (VASWVMQIVLGILSAVLGGFF), 86–106 (SGAAIWTGAVAVLAGAAAFIY), 113–133 (YWALLRTLLTLAAFSTAIAAL), and 193–213 (AMLLGVWILLLLASLTPLWLY).

It belongs to the TMEM176 family. As to quaternary structure, interacts with MCOLN2.

The protein resides in the membrane. This Homo sapiens (Human) protein is Transmembrane protein 176A (TMEM176A).